Consider the following 236-residue polypeptide: Flagellar L-ring protein (236 aa).

The N-terminal stretch at 1-16 (MRMRITAILAAGLLAG) is a signal peptide. A lipid anchor (N-palmitoyl cysteine) is attached at C17. C17 carries the S-diacylglycerol cysteine lipid modification. Residues 96–143 (ENETDRSRKNSSGFNLGASGESQTSDFAWSGDLEYGSNTKTEGDGKTE) are disordered. Residues 105-122 (NSSGFNLGASGESQTSDF) are compositionally biased toward polar residues.

The protein belongs to the FlgH family. As to quaternary structure, the basal body constitutes a major portion of the flagellar organelle and consists of four rings (L,P,S, and M) mounted on a central rod.

Its subcellular location is the cell outer membrane. It localises to the bacterial flagellum basal body. In terms of biological role, assembles around the rod to form the L-ring and probably protects the motor/basal body from shearing forces during rotation. The protein is Flagellar L-ring protein of Sinorhizobium medicae (strain WSM419) (Ensifer medicae).